A 467-amino-acid chain; its full sequence is Nodulation protein T (467 aa).

Positions 1 to 17 (MRFTRYTTPFFSLLLSG) are cleaved as a signal peptide. Residue cysteine 18 is the site of N-palmitoyl cysteine attachment. Cysteine 18 carries the S-diacylglycerol cysteine lipid modification.

This sequence belongs to the outer membrane factor (OMF) (TC 1.B.17) family.

The protein resides in the cell membrane. The polypeptide is Nodulation protein T (nodT) (Rhizobium leguminosarum bv. trifolii).